The sequence spans 250 residues: MSHNFHVIIPARYHSSRFPGKLLQEINGITVIERVYRQALLAEPKSVIIATDHDEIADRAIQFGAEVVITSHTHQTGTDRIAEVVAKGSFAPDDVIVNVQGDEPFIRPKLIQQVACSLTKTKAPVSTLCWPISSLEILNNPNVVKVVCTRDNHALYFSRSAIPYHRDNKSAYSNTFRHIGLYAYRAAFLLEFVSWPPCTLEQIECLEQLRILWSGFSIRVDEACEEPLQDINTKEDLILAQQYFLDISNI.

Belongs to the KdsB family.

The protein resides in the cytoplasm. The catalysed reaction is 3-deoxy-alpha-D-manno-oct-2-ulosonate + CTP = CMP-3-deoxy-beta-D-manno-octulosonate + diphosphate. It functions in the pathway nucleotide-sugar biosynthesis; CMP-3-deoxy-D-manno-octulosonate biosynthesis; CMP-3-deoxy-D-manno-octulosonate from 3-deoxy-D-manno-octulosonate and CTP: step 1/1. Its pathway is bacterial outer membrane biogenesis; lipopolysaccharide biosynthesis. Activates KDO (a required 8-carbon sugar) for incorporation into bacterial lipopolysaccharide in Gram-negative bacteria. The polypeptide is 3-deoxy-manno-octulosonate cytidylyltransferase (Legionella pneumophila (strain Corby)).